Consider the following 108-residue polypeptide: Urease subunit beta (108 aa).

It belongs to the urease beta subunit family. In terms of assembly, heterotrimer of UreA (gamma), UreB (beta) and UreC (alpha) subunits. Three heterotrimers associate to form the active enzyme.

The protein resides in the cytoplasm. The catalysed reaction is urea + 2 H2O + H(+) = hydrogencarbonate + 2 NH4(+). It participates in nitrogen metabolism; urea degradation; CO(2) and NH(3) from urea (urease route): step 1/1. In Microcystis aeruginosa (strain NIES-843 / IAM M-2473), this protein is Urease subunit beta.